Reading from the N-terminus, the 238-residue chain is Dephospho-CoA kinase (238 aa).

One can recognise a DPCK domain in the interval 3–233 (IIGLTGGVGT…QRPFASPPRA (231 aa)). 11 to 16 (GTGKST) contributes to the ATP binding site. Disordered regions lie at residues 110–129 (HGVP…VGFS) and 219–238 (LASA…YSDG).

It belongs to the CoaE family.

It is found in the cytoplasm. It catalyses the reaction 3'-dephospho-CoA + ATP = ADP + CoA + H(+). Its pathway is cofactor biosynthesis; coenzyme A biosynthesis; CoA from (R)-pantothenate: step 5/5. Catalyzes the phosphorylation of the 3'-hydroxyl group of dephosphocoenzyme A to form coenzyme A. The polypeptide is Dephospho-CoA kinase (Synechococcus sp. (strain JA-2-3B'a(2-13)) (Cyanobacteria bacterium Yellowstone B-Prime)).